We begin with the raw amino-acid sequence, 500 residues long: Aspartyl/glutamyl-tRNA(Asn/Gln) amidotransferase subunit B (500 aa).

Belongs to the GatB/GatE family. GatB subfamily. In terms of assembly, heterotrimer of A, B and C subunits.

It carries out the reaction L-glutamyl-tRNA(Gln) + L-glutamine + ATP + H2O = L-glutaminyl-tRNA(Gln) + L-glutamate + ADP + phosphate + H(+). The catalysed reaction is L-aspartyl-tRNA(Asn) + L-glutamine + ATP + H2O = L-asparaginyl-tRNA(Asn) + L-glutamate + ADP + phosphate + 2 H(+). In terms of biological role, allows the formation of correctly charged Asn-tRNA(Asn) or Gln-tRNA(Gln) through the transamidation of misacylated Asp-tRNA(Asn) or Glu-tRNA(Gln) in organisms which lack either or both of asparaginyl-tRNA or glutaminyl-tRNA synthetases. The reaction takes place in the presence of glutamine and ATP through an activated phospho-Asp-tRNA(Asn) or phospho-Glu-tRNA(Gln). The chain is Aspartyl/glutamyl-tRNA(Asn/Gln) amidotransferase subunit B from Brucella ovis (strain ATCC 25840 / 63/290 / NCTC 10512).